Reading from the N-terminus, the 376-residue chain is Chaperone protein DnaJ (376 aa).

The J domain maps to 5–70; sequence DYYEILGVSK…QKRAAYDQYG (66 aa). The segment at 131–209 adopts a CR-type zinc-finger fold; sequence GVTKEIRIPT…CHGHGRVERS (79 aa). Zn(2+) is bound by residues C144, C147, C161, C164, C183, C186, C197, and C200. CXXCXGXG motif repeat units lie at residues 144–151, 161–168, 183–190, and 197–204; these read CDVCHGSG, CPTCHGSG, CPHCQGRG, and CNKCHGHG.

This sequence belongs to the DnaJ family. As to quaternary structure, homodimer. The cofactor is Zn(2+).

Its subcellular location is the cytoplasm. Participates actively in the response to hyperosmotic and heat shock by preventing the aggregation of stress-denatured proteins and by disaggregating proteins, also in an autonomous, DnaK-independent fashion. Unfolded proteins bind initially to DnaJ; upon interaction with the DnaJ-bound protein, DnaK hydrolyzes its bound ATP, resulting in the formation of a stable complex. GrpE releases ADP from DnaK; ATP binding to DnaK triggers the release of the substrate protein, thus completing the reaction cycle. Several rounds of ATP-dependent interactions between DnaJ, DnaK and GrpE are required for fully efficient folding. Also involved, together with DnaK and GrpE, in the DNA replication of plasmids through activation of initiation proteins. The sequence is that of Chaperone protein DnaJ from Escherichia coli O157:H7 (strain EC4115 / EHEC).